The primary structure comprises 489 residues: Aspartate/glutamate permease AcaP (489 aa).

12 helical membrane passes run 6 to 26 (IRWFTVAFIAFNMVWGMGNVV), 36 to 56 (VVTSWLLILALYFIPYALIVG), 91 to 111 (VVHIPYLAQKPQAILIAFGWV), 122 to 142 (MSMTAVALISLAIFLAFLWLS), 152 to 172 (IGGLAGTAMFVMSLLFIVMAI), 195 to 215 (IPKFDFSYFTTISMLVFAVGG), 238 to 258 (FLLAGMVGICAVLGSIAMGMI), 290 to 310 (LMIVYALTNGVGQIAALAFSI), 342 to 362 (GYTLTGILVSIIILLPLLGIG), 373 to 393 (NLNSVVMPMRYLWVFFAFIML), 413 to 433 (AMIAGAWCFLFTLIACVLGMV), and 449 to 469 (LASNILTPIVLILLGMLLPFI).

This sequence belongs to the amino acid-polyamine-organocation (APC) superfamily. Glutamate:GABA antiporter (GGA) (TC 2.A.3.7) family.

It localises to the cell membrane. Functionally, involved in aspartate and glutamate uptake. Plays no significant role in the excretion of accumulated glutamate. In Lactococcus lactis subsp. cremoris (strain MG1363), this protein is Aspartate/glutamate permease AcaP.